The sequence spans 711 residues: Putative membrane protein IgaA homolog (711 aa).

Position 1 (methionine 1) is a topological domain, periplasmic. Residues serine 2–isoleucine 22 traverse the membrane as a helical segment. The Cytoplasmic segment spans residues lysine 23–arginine 204. A run of 2 helical transmembrane segments spans residues glutamate 205–valine 225 and phenylalanine 226–phenylalanine 246. Residues alanine 247 to arginine 339 are Cytoplasmic-facing. Residues serine 340–leucine 360 form a helical membrane-spanning segment. At aspartate 361–tyrosine 655 the chain is on the periplasmic side. The helical transmembrane segment at leucine 656–alanine 676 threads the bilayer. At tryptophan 677–glutamate 711 the chain is on the cytoplasmic side.

Belongs to the IgaA family.

The protein resides in the cell inner membrane. The protein is Putative membrane protein IgaA homolog (yrfF) of Escherichia coli (strain K12).